We begin with the raw amino-acid sequence, 209 residues long: MTQARTKKNPPLRVGVGGPVGSGKTTLLEMLCKAMRDRYDLVAITNDIYTKEDQRLLTVSGALPAERIMGVETGGCPHTAIREDASINLEAVDRMLARFPDADVVFIESGGDNLAATFSPELSDLTIYVIDVAGGEKIPRKGGPGITKSDLLVINKTDLAPYVGASLEVMESDARKMRGARPFVMGSVKSGQGLDEVIRFIERQGMLGV.

18 to 25 lines the GTP pocket; the sequence is GPVGSGKT.

It belongs to the SIMIBI class G3E GTPase family. UreG subfamily. In terms of assembly, homodimer. UreD, UreF and UreG form a complex that acts as a GTP-hydrolysis-dependent molecular chaperone, activating the urease apoprotein by helping to assemble the nickel containing metallocenter of UreC. The UreE protein probably delivers the nickel.

The protein localises to the cytoplasm. In terms of biological role, facilitates the functional incorporation of the urease nickel metallocenter. This process requires GTP hydrolysis, probably effectuated by UreG. The chain is Urease accessory protein UreG from Cupriavidus necator (strain ATCC 17699 / DSM 428 / KCTC 22496 / NCIMB 10442 / H16 / Stanier 337) (Ralstonia eutropha).